The following is an 811-amino-acid chain: Probable glutamine--tRNA ligase (811 aa).

Residues 190–217 (DAAAGKKKGAKAKNSKQKTVDSGKAKEQ) form a disordered region. A compositionally biased stretch (basic residues) spans 194-205 (GKKKGAKAKNSK). Residues 207 to 217 (KTVDSGKAKEQ) are compositionally biased toward basic and acidic residues. The 'HIGH' region signature appears at 269–279 (PEPNGYLHIGH). Residues 270 to 272 (EPN) and 276 to 282 (HIGHSKA) each bind ATP. Residues D302 and Y447 each coordinate L-glutamine. ATP contacts are provided by residues T466, 495–496 (RL), and 503–505 (MSK). Positions 502–506 (LMSKR) match the 'KMSKS' region motif.

It belongs to the class-I aminoacyl-tRNA synthetase family.

The protein localises to the cytoplasm. It carries out the reaction tRNA(Gln) + L-glutamine + ATP = L-glutaminyl-tRNA(Gln) + AMP + diphosphate. The chain is Probable glutamine--tRNA ligase (qrs1) from Schizosaccharomyces pombe (strain 972 / ATCC 24843) (Fission yeast).